A 67-amino-acid polypeptide reads, in one-letter code: Protein AaeX (67 aa).

The next 2 helical transmembrane spans lie at 10–30 (FGLS…LFFV) and 43–63 (FVWH…YLLF).

Belongs to the AaeX family.

Its subcellular location is the cell membrane. In Pectobacterium carotovorum subsp. carotovorum (strain PC1), this protein is Protein AaeX.